A 628-amino-acid chain; its full sequence is tRNA uridine 5-carboxymethylaminomethyl modification enzyme MnmG (628 aa).

13-18 provides a ligand contact to FAD; sequence GAGHAG. Residue 281–295 coordinates NAD(+); it reads GARYCPSIEDKIKKF.

Belongs to the MnmG family. Homodimer. Heterotetramer of two MnmE and two MnmG subunits. The cofactor is FAD.

It is found in the cytoplasm. Functionally, NAD-binding protein involved in the addition of a carboxymethylaminomethyl (cmnm) group at the wobble position (U34) of certain tRNAs, forming tRNA-cmnm(5)s(2)U34. The sequence is that of tRNA uridine 5-carboxymethylaminomethyl modification enzyme MnmG from Treponema denticola (strain ATCC 35405 / DSM 14222 / CIP 103919 / JCM 8153 / KCTC 15104).